We begin with the raw amino-acid sequence, 404 residues long: Pyrophosphate--fructose 6-phosphate 1-phosphotransferase (404 aa).

Residue Gly-13 participates in diphosphate binding. Position 108 (Asn-108) interacts with Mg(2+). Substrate-binding positions include Thr-136–Asp-138, Met-180–Arg-182, Glu-237, and Tyr-295–Arg-298. The Proton acceptor role is filled by Asp-138.

It belongs to the phosphofructokinase type A (PFKA) family. PPi-dependent PFK group II subfamily. Clade 'B2' sub-subfamily. In terms of assembly, homodimer. Mg(2+) is required as a cofactor.

The protein resides in the cytoplasm. The enzyme catalyses beta-D-fructose 6-phosphate + diphosphate = beta-D-fructose 1,6-bisphosphate + phosphate + H(+). It functions in the pathway carbohydrate degradation; glycolysis; D-glyceraldehyde 3-phosphate and glycerone phosphate from D-glucose: step 3/4. With respect to regulation, non-allosteric. Functionally, catalyzes the phosphorylation of D-fructose 6-phosphate, the first committing step of glycolysis. Uses inorganic phosphate (PPi) as phosphoryl donor instead of ATP like common ATP-dependent phosphofructokinases (ATP-PFKs), which renders the reaction reversible, and can thus function both in glycolysis and gluconeogenesis. Consistently, PPi-PFK can replace the enzymes of both the forward (ATP-PFK) and reverse (fructose-bisphosphatase (FBPase)) reactions. The polypeptide is Pyrophosphate--fructose 6-phosphate 1-phosphotransferase (Rhodospirillum rubrum (strain ATCC 11170 / ATH 1.1.1 / DSM 467 / LMG 4362 / NCIMB 8255 / S1)).